The following is an 803-amino-acid chain: Carbon monoxide dehydrogenase large chain (803 aa).

A 4-hydroxyarginine modification is found at R384. C385 is a Cu(+) binding site. E757 serves as a coordination point for Mo-molybdopterin cytosine dinucleotide.

As to quaternary structure, dimer of heterotrimers. Each heterotrimer consists of a large, a medium and a small subunit. Cu(+) is required as a cofactor. Mo-molybdopterin cytosine dinucleotide serves as cofactor.

It catalyses the reaction CO + a quinone + H2O = a quinol + CO2. Catalyzes the oxidation of carbon monoxide to carbon dioxide. The chain is Carbon monoxide dehydrogenase large chain (cutL) from Hydrogenophaga pseudoflava (Pseudomonas carboxydoflava).